The primary structure comprises 513 residues: Quiannulatic acid synthase (513 aa).

The helical transmembrane segment at 14–34 threads the bilayer; that stretch reads VFTFCNIILALASLVVAQCVY. An N-linked (GlcNAc...) asparagine glycan is attached at asparagine 308. Cysteine 477 contributes to the heme binding site.

It belongs to the cytochrome P450 family. The cofactor is heme.

The protein resides in the membrane. It catalyses the reaction quiannulatene + 3 reduced [NADPH--hemoprotein reductase] + 3 O2 = quiannulatate + 3 oxidized [NADPH--hemoprotein reductase] + 4 H2O + 4 H(+). It participates in secondary metabolite biosynthesis; terpenoid biosynthesis. Its function is as follows. Cytochrome P450 monooxygenase; part of the gene cluster that mediates the biosynthesis of the pentacyclic sesterterpene quiannulatic acid. The first step of the pathway is performed by the sesterterpene synthase (QS) that possesses both prenyl transferase and terpene cyclase activity, converting isopentenyl diphosphate and dimethylallyl diphosphate into geranylfarnesyl diphosphate (GFPP) and further converting GFPP into quiannulatene via an unprecedented cyclization mode which involves three rounds of hydride shifts and two successive C-C bond migrations to construct the 5-6-5-5-5 fused ring. The cytochrome P450 monooxygenase Qnn-P450 then oxidizes quiannulatene at C-19 in 3 successive reactions to afford quiannulatic acid. The chain is Quiannulatic acid synthase from Emericella variicolor (Aspergillus stellatus).